The sequence spans 308 residues: Ribosomal RNA large subunit methyltransferase F (308 aa).

The protein belongs to the methyltransferase superfamily. METTL16/RlmF family.

It is found in the cytoplasm. It catalyses the reaction adenosine(1618) in 23S rRNA + S-adenosyl-L-methionine = N(6)-methyladenosine(1618) in 23S rRNA + S-adenosyl-L-homocysteine + H(+). Specifically methylates the adenine in position 1618 of 23S rRNA. The polypeptide is Ribosomal RNA large subunit methyltransferase F (Escherichia coli (strain SMS-3-5 / SECEC)).